The primary structure comprises 745 residues: Chitin synthase D (745 aa).

5 helical membrane-spanning segments follow: residues 26-46 (LAHR…PVHL), 55-75 (VLML…IPWL), 412-432 (TTAL…SSIN), 434-454 (LPVG…FYLG), and 464-484 (LFPL…VYGI). Disordered stretches follow at residues 613–635 (TGDN…SLHQ) and 672–745 (ILPH…ESMV). Polar residues predominate over residues 707 to 720 (NASTRGSMEGNTPE).

The protein belongs to the chitin synthase family. Class VI subfamily.

The protein resides in the cell membrane. The catalysed reaction is [(1-&gt;4)-N-acetyl-beta-D-glucosaminyl](n) + UDP-N-acetyl-alpha-D-glucosamine = [(1-&gt;4)-N-acetyl-beta-D-glucosaminyl](n+1) + UDP + H(+). Functionally, polymerizes chitin, a structural polymer of the cell wall and septum, by transferring the sugar moiety of UDP-GlcNAc to the non-reducing end of the growing chitin polymer. The protein is Chitin synthase D (chsD) of Aspergillus fumigatus (strain ATCC MYA-4609 / CBS 101355 / FGSC A1100 / Af293) (Neosartorya fumigata).